The chain runs to 141 residues: Large ribosomal subunit protein uL11 (141 aa).

This sequence belongs to the universal ribosomal protein uL11 family. As to quaternary structure, part of the ribosomal stalk of the 50S ribosomal subunit. Interacts with L10 and the large rRNA to form the base of the stalk. L10 forms an elongated spine to which L12 dimers bind in a sequential fashion forming a multimeric L10(L12)X complex. One or more lysine residues are methylated.

Its function is as follows. Forms part of the ribosomal stalk which helps the ribosome interact with GTP-bound translation factors. The sequence is that of Large ribosomal subunit protein uL11 from Synechococcus sp. (strain CC9902).